The primary structure comprises 198 residues: Small ribosomal subunit protein uS4c (198 aa).

The interval 17 to 40 (TLPGLTSKRPKNRKDSMNRSSSRK) is disordered. An S4 RNA-binding domain is found at 88-154 (MRLDKSFSIG…IKKNIDLFQR (67 aa)).

It belongs to the universal ribosomal protein uS4 family. Part of the 30S ribosomal subunit. Contacts protein S5. The interaction surface between S4 and S5 is involved in control of translational fidelity.

Its subcellular location is the plastid. The protein resides in the chloroplast. In terms of biological role, one of the primary rRNA binding proteins, it binds directly to 16S rRNA where it nucleates assembly of the body of the 30S subunit. With S5 and S12 plays an important role in translational accuracy. This Pinus thunbergii (Japanese black pine) protein is Small ribosomal subunit protein uS4c (rps4).